Consider the following 550-residue polypeptide: 2-succinyl-5-enolpyruvyl-6-hydroxy-3-cyclohexene-1-carboxylate synthase (550 aa).

Belongs to the TPP enzyme family. MenD subfamily. Homodimer. It depends on Mg(2+) as a cofactor. Mn(2+) serves as cofactor. Requires thiamine diphosphate as cofactor.

It carries out the reaction isochorismate + 2-oxoglutarate + H(+) = 5-enolpyruvoyl-6-hydroxy-2-succinyl-cyclohex-3-ene-1-carboxylate + CO2. Its pathway is quinol/quinone metabolism; 1,4-dihydroxy-2-naphthoate biosynthesis; 1,4-dihydroxy-2-naphthoate from chorismate: step 2/7. It functions in the pathway quinol/quinone metabolism; menaquinone biosynthesis. Functionally, catalyzes the thiamine diphosphate-dependent decarboxylation of 2-oxoglutarate and the subsequent addition of the resulting succinic semialdehyde-thiamine pyrophosphate anion to isochorismate to yield 2-succinyl-5-enolpyruvyl-6-hydroxy-3-cyclohexene-1-carboxylate (SEPHCHC). This chain is 2-succinyl-5-enolpyruvyl-6-hydroxy-3-cyclohexene-1-carboxylate synthase, found in Flavobacterium psychrophilum (strain ATCC 49511 / DSM 21280 / CIP 103535 / JIP02/86).